Here is a 228-residue protein sequence, read N- to C-terminus: Translin (228 aa).

Positions 86 to 90 (RFHEH) are DNA/RNA binding. A leucine-zipper region spans residues 177–198 (LDSGFRLLNLKNDSLRKRYDGL). K187 bears the N6-acetyllysine mark. The residue at position 190 (S190) is a Phosphoserine. K199 bears the N6-acetyllysine mark.

This sequence belongs to the translin family. In terms of assembly, ring-shaped heterooctamer of six TSN and two TSNAX subunits, DNA/RNA binding occurs inside the ring.

The protein resides in the cytoplasm. It is found in the nucleus. Its function is as follows. DNA-binding protein that specifically recognizes consensus sequences at the breakpoint junctions in chromosomal translocations, mostly involving immunoglobulin (Ig)/T-cell receptor gene segments. Seems to recognize single-stranded DNA ends generated by staggered breaks occurring at recombination hot spots. In terms of biological role, exhibits both single-stranded and double-stranded endoribonuclease activity. May act as an activator of RNA-induced silencing complex (RISC) by facilitating endonucleolytic cleavage of the siRNA passenger strand. This Cricetulus griseus (Chinese hamster) protein is Translin (TSN).